A 366-amino-acid chain; its full sequence is Chorismate synthase (366 aa).

Arginine 48 and arginine 54 together coordinate NADP(+). FMN is bound by residues 125–127 (RSS), 241–242 (NA), glycine 285, 300–304 (KPTSS), and arginine 326.

Belongs to the chorismate synthase family. Homotetramer. FMNH2 serves as cofactor.

The enzyme catalyses 5-O-(1-carboxyvinyl)-3-phosphoshikimate = chorismate + phosphate. The protein operates within metabolic intermediate biosynthesis; chorismate biosynthesis; chorismate from D-erythrose 4-phosphate and phosphoenolpyruvate: step 7/7. In terms of biological role, catalyzes the anti-1,4-elimination of the C-3 phosphate and the C-6 proR hydrogen from 5-enolpyruvylshikimate-3-phosphate (EPSP) to yield chorismate, which is the branch point compound that serves as the starting substrate for the three terminal pathways of aromatic amino acid biosynthesis. This reaction introduces a second double bond into the aromatic ring system. In Cereibacter sphaeroides (strain ATCC 17023 / DSM 158 / JCM 6121 / CCUG 31486 / LMG 2827 / NBRC 12203 / NCIMB 8253 / ATH 2.4.1.) (Rhodobacter sphaeroides), this protein is Chorismate synthase.